The sequence spans 361 residues: Beta-hexosaminidase (361 aa).

Residues D69, R77, R144, and 174-175 (KH) each bind substrate. The Proton donor/acceptor role is filled by H187. Residue D258 is the Nucleophile of the active site.

Belongs to the glycosyl hydrolase 3 family. NagZ subfamily.

The protein localises to the cytoplasm. It catalyses the reaction Hydrolysis of terminal non-reducing N-acetyl-D-hexosamine residues in N-acetyl-beta-D-hexosaminides.. It participates in cell wall biogenesis; peptidoglycan recycling. In terms of biological role, plays a role in peptidoglycan recycling by cleaving the terminal beta-1,4-linked N-acetylglucosamine (GlcNAc) from peptide-linked peptidoglycan fragments, giving rise to free GlcNAc, anhydro-N-acetylmuramic acid and anhydro-N-acetylmuramic acid-linked peptides. The protein is Beta-hexosaminidase of Neisseria meningitidis serogroup C (strain 053442).